We begin with the raw amino-acid sequence, 1034 residues long: Probable isoleucine--tRNA ligase, mitochondrial (1034 aa).

Residues 1–32 (MISLNNSFFNKRVIVNSFNNYKRSFGTKSQNE) constitute a mitochondrion transit peptide. The 'HIGH' region motif lies at 94–104 (PYANGDLHMGH). A 'KMSKS' region motif is present at residues 655 to 659 (KMSKS). Lysine 658 serves as a coordination point for ATP.

Belongs to the class-I aminoacyl-tRNA synthetase family.

Its subcellular location is the mitochondrion matrix. The enzyme catalyses tRNA(Ile) + L-isoleucine + ATP = L-isoleucyl-tRNA(Ile) + AMP + diphosphate. This is Probable isoleucine--tRNA ligase, mitochondrial (mileS) from Dictyostelium discoideum (Social amoeba).